Consider the following 327-residue polypeptide: E3 ubiquitin-protein ligase ZNRF4 (327 aa).

Positions 1–28 (MARFAWTRVAPVALVTFWLVLSLSPTDA) are cleaved as a signal peptide. Topologically, residues 29–150 (QVNLSSVDFL…EPCPDPECHP (122 aa)) are lumenal. N-linked (GlcNAc...) asparagine glycosylation occurs at Asn-31. The helical transmembrane segment at 151–171 (VVVASWALARALALAASTLFV) threads the bilayer. Over 172 to 327 (LRQLWPWVRG…AQSEATSELS (156 aa)) the chain is Cytoplasmic. The RING-type; atypical zinc finger occupies 209–252 (CAICLDDYEEGERLKILPCAHAYHCRCIDPWFSRAAQRSCPLCK). Residues 256 to 265 (ASTHDGSTDG) show a composition bias toward polar residues. Positions 256–279 (ASTHDGSTDGSVGGEEPPLPGHRP) are disordered.

As to quaternary structure, interacts with CANX. As to expression, expressed exclusively in spermatids (at protein level).

The protein resides in the endoplasmic reticulum membrane. The enzyme catalyses S-ubiquitinyl-[E2 ubiquitin-conjugating enzyme]-L-cysteine + [acceptor protein]-L-lysine = [E2 ubiquitin-conjugating enzyme]-L-cysteine + N(6)-ubiquitinyl-[acceptor protein]-L-lysine.. The protein operates within protein modification; protein ubiquitination. E3 ubiquitin-protein ligase that acts as a negative regulator of NOD2 signaling by mediating ubiquitination and degradation of RIPK2. Also catalyzes ubiquitination and proteasomal degradation of CANX within the endoplasmic reticulum. Could have a role in spermatogenesis. The sequence is that of E3 ubiquitin-protein ligase ZNRF4 from Mus musculus (Mouse).